Reading from the N-terminus, the 417-residue chain is UPF0761 membrane protein Veis_3782 (417 aa).

Transmembrane regions (helical) follow at residues 54-74 (ILAL…FPIF), 111-131 (GLGL…ILTI), 151-171 (VLIY…SLAL), 192-212 (FLFD…LYHY), 226-246 (GGLF…LYLG), and 261-281 (LPIL…GAVV).

The protein belongs to the UPF0761 family.

It is found in the cell inner membrane. The sequence is that of UPF0761 membrane protein Veis_3782 from Verminephrobacter eiseniae (strain EF01-2).